The following is a 162-amino-acid chain: CASP-like protein 0U1 (162 aa).

Residues 1–11 (MAAVEAAKTPR) lie on the Cytoplasmic side of the membrane. Residues 12–32 (FILLIIEWVFALVAFAVMGHY) form a helical membrane-spanning segment. At 33–43 (LFDDRRSSFEY) the chain is on the extracellular side. Residues 44-64 (LTAICILVWLVVMIYMVILCC) traverse the membrane as a helical segment. Over 65–69 (GRALP) the chain is Cytoplasmic. A helical transmembrane segment spans residues 70–90 (PLIEAAIFLLFAILVFIAFLV). Residues 91–123 (TAVKCNNSETIVIAGQTISRKVCEGESEPKAAA) lie on the Extracellular side of the membrane. N-linked (GlcNAc...) asparagine glycosylation is present at Asn-96. Residues 124-144 (AFAFLLGLLLAGSSVLGCIAF) form a helical membrane-spanning segment. Topologically, residues 145-162 (RRPSAPPLSSFQNPTSSV) are cytoplasmic.

The protein belongs to the Casparian strip membrane proteins (CASP) family. Homodimer and heterodimers.

The protein localises to the cell membrane. The chain is CASP-like protein 0U1 from Chlorokybus atmophyticus (Soil alga).